The sequence spans 48 residues: ATP synthase protein 8 (48 aa).

The helical transmembrane segment at 16–36 (GFLLMTILLVLFSQFFLPMIL) threads the bilayer.

Belongs to the ATPase protein 8 family. F-type ATPases have 2 components, CF(1) - the catalytic core - and CF(0) - the membrane proton channel.

It is found in the mitochondrion membrane. Mitochondrial membrane ATP synthase (F(1)F(0) ATP synthase or Complex V) produces ATP from ADP in the presence of a proton gradient across the membrane which is generated by electron transport complexes of the respiratory chain. F-type ATPases consist of two structural domains, F(1) - containing the extramembraneous catalytic core and F(0) - containing the membrane proton channel, linked together by a central stalk and a peripheral stalk. During catalysis, ATP synthesis in the catalytic domain of F(1) is coupled via a rotary mechanism of the central stalk subunits to proton translocation. Part of the complex F(0) domain. Minor subunit located with subunit a in the membrane. The sequence is that of ATP synthase protein 8 (ATP8) from Vanderwaltozyma polyspora (strain ATCC 22028 / DSM 70294 / BCRC 21397 / CBS 2163 / NBRC 10782 / NRRL Y-8283 / UCD 57-17) (Kluyveromyces polysporus).